Reading from the N-terminus, the 248-residue chain is PF03932 family protein CutC (248 aa).

Belongs to the CutC family. In terms of assembly, homodimer.

It is found in the cytoplasm. This is PF03932 family protein CutC from Escherichia coli O139:H28 (strain E24377A / ETEC).